Consider the following 462-residue polypeptide: GTPase Der (462 aa).

EngA-type G domains are found at residues 3-166 (PVIA…TTET) and 175-348 (IKIA…HSAI). GTP-binding positions include 9 to 16 (GRPNVGKS), 56 to 60 (DTGGI), 118 to 121 (NKTD), 181 to 188 (GRPNVGKS), 228 to 232 (DTAGV), and 293 to 296 (NKWD). The 85-residue stretch at 349–433 (QSFSTPKLTR…PLKIEFKGGQ (85 aa)) folds into the KH-like domain.

Belongs to the TRAFAC class TrmE-Era-EngA-EngB-Septin-like GTPase superfamily. EngA (Der) GTPase family. As to quaternary structure, associates with the 50S ribosomal subunit.

Its function is as follows. GTPase that plays an essential role in the late steps of ribosome biogenesis. The polypeptide is GTPase Der (Legionella pneumophila (strain Paris)).